The sequence spans 176 residues: NAD(P)H-quinone oxidoreductase subunit 6, chloroplastic (176 aa).

Helical transmembrane passes span 10–30 (ILLV…ILLT), 32–52 (TIYS…FYIL), 61–81 (AQLL…VMFM), 92–112 (IWTV…FSLI), and 152–172 (FILP…GAIA).

The protein belongs to the complex I subunit 6 family. As to quaternary structure, NDH is composed of at least 16 different subunits, 5 of which are encoded in the nucleus.

The protein resides in the plastid. It localises to the chloroplast thylakoid membrane. The catalysed reaction is a plastoquinone + NADH + (n+1) H(+)(in) = a plastoquinol + NAD(+) + n H(+)(out). It catalyses the reaction a plastoquinone + NADPH + (n+1) H(+)(in) = a plastoquinol + NADP(+) + n H(+)(out). Its function is as follows. NDH shuttles electrons from NAD(P)H:plastoquinone, via FMN and iron-sulfur (Fe-S) centers, to quinones in the photosynthetic chain and possibly in a chloroplast respiratory chain. The immediate electron acceptor for the enzyme in this species is believed to be plastoquinone. Couples the redox reaction to proton translocation, and thus conserves the redox energy in a proton gradient. The chain is NAD(P)H-quinone oxidoreductase subunit 6, chloroplastic (ndhG) from Piper cenocladum (Ant piper).